Here is a 147-residue protein sequence, read N- to C-terminus: uncharacterized protein (147 aa).

Residues 72–81 show a composition bias toward low complexity; that stretch reads ARAKPASRAP. The tract at residues 72–147 is disordered; sequence ARAKPASRAP…QGAAGRRLSP (76 aa).

This is an uncharacterized protein from Homo sapiens (Human).